The primary structure comprises 862 residues: Interleukin-12 receptor subunit beta-2 (862 aa).

A signal peptide spans 1–23 (MAHTFRGCSLAFMFIITWLLIKA). The Extracellular portion of the chain corresponds to 24–622 (KIDACKRGDV…REFCLQGKAN (599 aa)). Asn-48, Asn-129, Asn-166, Asn-195, and Asn-271 each carry an N-linked (GlcNAc...) asparagine glycan. 5 consecutive Fibronectin type-III domains span residues 126–221 (QPQN…FLDI), 226–319 (PPWD…TPEE), 320–419 (EPTG…LCEA), 423–520 (APRQ…KHKA), and 521–620 (PLSG…LQGK). Residues 305-309 (WSDWS) carry the WSXWS motif motif. N-linked (GlcNAc...) asparagine glycosylation is found at Asn-347, Asn-376, and Asn-480. A helical transmembrane segment spans residues 623–643 (WMAFVAPSICIAIIMVGIFST). The Cytoplasmic portion of the chain corresponds to 644–862 (HYFQQKVFVL…LKMRCDSLML (219 aa)). The short motif at 662–670 (CSREIPDPA) is the Box 1 motif element. Residues 725-755 (NWPQREKGIQGHQASEKDMMHSASSPPPPRA) are disordered. Residues 728–744 (QREKGIQGHQASEKDMM) show a composition bias toward basic and acidic residues. A required for STAT4 binding region spans residues 796–801 (THDGYL). Phosphotyrosine is present on Tyr-800.

This sequence belongs to the type I cytokine receptor family. Type 2 subfamily. In terms of assembly, heterodimer/heterooligomer; disulfide-linked. The functional high affinity IL12 receptor is composed of I12RB1 and IL12RB2. Il12RB2 binds JAK2 (via its N-terminal) through a membrane-proximal region of the cytoplasmic domain. Interaction, in vitro and in vivo, with SOCS3 (via its SH2 domain) inhibits the STAT4-mediated activation. Binds STAT4 through a membrane-distal C-terminal region. In terms of processing, on IL12 binding, phosphorylated on C-terminal tyrosine residues by JAK2. Phosphorylation on Tyr-800 is required for STAT4 binding and activation, and for SOCS3 binding. As to expression, isoform 2 is expressed at similar levels in both naive and activated T-cells.

Its subcellular location is the membrane. Receptor for interleukin-12. This subunit is the signaling component coupling to the JAK2/STAT4 pathway. Promotes the proliferation of T-cells as well as NK cells. Induces the promotion of T-cells towards the Th1 phenotype by strongly enhancing IFN-gamma production. This chain is Interleukin-12 receptor subunit beta-2 (IL12RB2), found in Homo sapiens (Human).